Here is a 116-residue protein sequence, read N- to C-terminus: Large ribosomal subunit protein bL17 (116 aa).

The protein belongs to the bacterial ribosomal protein bL17 family. In terms of assembly, part of the 50S ribosomal subunit. Contacts protein L32.

This is Large ribosomal subunit protein bL17 from Gloeothece citriformis (strain PCC 7424) (Cyanothece sp. (strain PCC 7424)).